The following is a 310-amino-acid chain: AMMECR1-like protein (310 aa).

The interval 26–95 (LSGSGTHSHG…LSPLPRPNGT (70 aa)) is disordered. Residues 28–66 (GSGTHSHGNQSTTVPGSSSGPLQNHQHVDSSSGRENVSD) show a composition bias toward polar residues. The residue at position 74 (serine 74) is a Phosphoserine. The region spanning 97 to 291 (NTTKNLVVTA…ISYAEYIASR (195 aa)) is the AMMECR1 domain.

The chain is AMMECR1-like protein (AMMECR1L) from Homo sapiens (Human).